The primary structure comprises 201 residues: Large ribosomal subunit protein uL4 (201 aa).

The tract at residues Thr-43 to Thr-73 is disordered.

The protein belongs to the universal ribosomal protein uL4 family. Part of the 50S ribosomal subunit.

One of the primary rRNA binding proteins, this protein initially binds near the 5'-end of the 23S rRNA. It is important during the early stages of 50S assembly. It makes multiple contacts with different domains of the 23S rRNA in the assembled 50S subunit and ribosome. Functionally, forms part of the polypeptide exit tunnel. This Colwellia psychrerythraea (strain 34H / ATCC BAA-681) (Vibrio psychroerythus) protein is Large ribosomal subunit protein uL4.